The following is a 126-amino-acid chain: Large ribosomal subunit protein bL19 (126 aa).

It belongs to the bacterial ribosomal protein bL19 family.

Its function is as follows. This protein is located at the 30S-50S ribosomal subunit interface and may play a role in the structure and function of the aminoacyl-tRNA binding site. This Dechloromonas aromatica (strain RCB) protein is Large ribosomal subunit protein bL19.